The primary structure comprises 258 residues: Regulatory protein RecX (258 aa).

It belongs to the RecX family.

It is found in the cytoplasm. Functionally, modulates RecA activity. The protein is Regulatory protein RecX of Streptococcus pyogenes serotype M12 (strain MGAS2096).